The chain runs to 218 residues: MSSKRTSPNGKQRLLNFLRGLLEDDSHSDLITWSNKDTLEFQMLKPHKVAELWGAATGNPGMNYDKMSRGLRYFYTNNTLKKVKGKDSRYCFLDTPLLAPFPDFFPKANEPMRRVPLFSIENLLASSEETTSNFSLQSSPSSSSNSSSARTMSATSSPTSSLEDVINPPVLIDPFQMQMAHITQTFLATQLPALQAFPMQLQLQFLKTLLPTLFPNNN.

The ETS DNA-binding region spans 12–93 (QRLLNFLRGL…KGKDSRYCFL (82 aa)). Residues 131 to 161 (TSNFSLQSSPSSSSNSSSARTMSATSSPTSS) are compositionally biased toward low complexity. Residues 131–162 (TSNFSLQSSPSSSSNSSSARTMSATSSPTSSL) are disordered.

It belongs to the ETS family.

The protein resides in the nucleus. Its function is as follows. Probable transcription factor. Involved in responses to oxidative stress. The chain is ETS domain-containing protein ets-7 from Caenorhabditis elegans.